A 353-amino-acid chain; its full sequence is MGCGMSTEDKEGKARNEEIENQLKRDKMMQRNEIKMLLLGAGESGKSTILKQMKLIHEGGYSRDERESFKEIIYSNTVQSMRVILEAMESLELPLEDARNEYHVQTIFMQPAQIEGDSLPPEVGNAIGALWRDTGVQECFKRSREYQLNDSAKYYFDAIDRIAQPDYLPTDQDVLRSRVKTTGITETTFIIGDLTYRMFDVGGQRSERKKWIHCFENVTTILFLVAISEYDQLLFEDETVNRMQEALTLFDSICNSRWFVKTSIILFLNKIDRFKEKLPVSPMKNYFPDYEGGADYAAACDYILNRFVSLNQAEQKQIYTHFTCATDTTQIRFVMAAVNDIIIQENLRLCGLI.

Residues 1-25 are disordered; it reads MGCGMSTEDKEGKARNEEIENQLKR. Residues 7–25 are compositionally biased toward basic and acidic residues; sequence TEDKEGKARNEEIENQLKR. The 322-residue stretch at 32–353 folds into the G-alpha domain; the sequence is NEIKMLLLGA…QENLRLCGLI (322 aa). The interval 35–48 is G1 motif; the sequence is KMLLLGAGESGKST. Residues Ser-47 and Thr-181 each contribute to the a divalent metal cation site. The G2 motif stretch occupies residues 173 to 181; sequence DVLRSRVKT. Residues 196–205 form a G3 motif region; the sequence is YRMFDVGGQR. A G4 motif region spans residues 265 to 272; sequence ILFLNKID. Positions 323 to 328 are G5 motif; sequence TCATDT.

The protein belongs to the G-alpha family. G(q) subfamily. In terms of assembly, g proteins are composed of 3 units; alpha, beta and gamma. The alpha chain contains the guanine nucleotide binding site. Interacts with gprM.

G-protein complex alpha subunit that plays a role in conidiation and regulation of the biosynthesis of secondary metabolites such as dihydroxynaphthalene (DHN)-melanin, via interaction with the G protein-coupled receptor gprM. This Aspergillus fumigatus (strain CBS 144.89 / FGSC A1163 / CEA10) (Neosartorya fumigata) protein is G-protein complex alpha subunit gpaA.